We begin with the raw amino-acid sequence, 256 residues long: F-actin-capping protein subunit alpha (256 aa).

Serine 31 bears the Phosphoserine mark.

Belongs to the F-actin-capping protein alpha subunit family. In terms of assembly, component of the F-actin capping complex, composed of a heterodimer of an alpha and a beta subunit.

The protein resides in the cytoplasm. It is found in the cytoskeleton. It localises to the actin patch. Functionally, F-actin-capping proteins bind in a Ca(2+)-independent manner to the fast growing ends of actin filaments (barbed end) thereby blocking the exchange of subunits at these ends. Unlike other capping proteins (such as gelsolin and severin), these proteins do not sever actin filaments. Competes with formin cdc12 for attachment to the actin filaments barbed ends. Slowly replaces cdc12 on the barbed ends in preparation for filament disassembly during contractile ring constriction. The chain is F-actin-capping protein subunit alpha (acp1) from Schizosaccharomyces pombe (strain 972 / ATCC 24843) (Fission yeast).